The following is a 312-amino-acid chain: HPr kinase/phosphorylase (312 aa).

Residues histidine 139 and lysine 160 contribute to the active site. An ATP-binding site is contributed by 154-161 (GSSGVGKS). Serine 161 is a Mg(2+) binding site. Residue aspartate 178 is the Proton acceptor; for phosphorylation activity. Proton donor; for dephosphorylation activity of the active site. Residues 202-211 (LEIRGLGIIN) are important for the catalytic mechanism of both phosphorylation and dephosphorylation. Residue glutamate 203 participates in Mg(2+) binding. Arginine 244 is an active-site residue. Residues 265–270 (PVRPGR) are important for the catalytic mechanism of dephosphorylation.

Belongs to the HPrK/P family. As to quaternary structure, homohexamer. Mg(2+) is required as a cofactor.

The catalysed reaction is [HPr protein]-L-serine + ATP = [HPr protein]-O-phospho-L-serine + ADP + H(+). It catalyses the reaction [HPr protein]-O-phospho-L-serine + phosphate + H(+) = [HPr protein]-L-serine + diphosphate. Its function is as follows. Catalyzes the ATP- as well as the pyrophosphate-dependent phosphorylation of a specific serine residue in HPr, a phosphocarrier protein of the phosphoenolpyruvate-dependent sugar phosphotransferase system (PTS). HprK/P also catalyzes the pyrophosphate-producing, inorganic phosphate-dependent dephosphorylation (phosphorolysis) of seryl-phosphorylated HPr (P-Ser-HPr). The two antagonistic activities of HprK/P are regulated by several intracellular metabolites, which change their concentration in response to the absence or presence of rapidly metabolisable carbon sources (glucose, fructose, etc.) in the growth medium. Therefore, by controlling the phosphorylation state of HPr, HPrK/P is a sensor enzyme that plays a major role in the regulation of carbon metabolism and sugar transport: it mediates carbon catabolite repression (CCR), and regulates PTS-catalyzed carbohydrate uptake and inducer exclusion. This is HPr kinase/phosphorylase from Listeria welshimeri serovar 6b (strain ATCC 35897 / DSM 20650 / CCUG 15529 / CIP 8149 / NCTC 11857 / SLCC 5334 / V8).